Consider the following 65-residue polypeptide: Putative beta-neurotoxin RjAa4 (65 aa).

The LCN-type CS-alpha/beta domain maps to 1 to 64 (KEGYPMGRDG…VWDSSTNKCG (64 aa)). Intrachain disulfides connect Cys-11/Cys-63, Cys-15/Cys-37, Cys-22/Cys-44, and Cys-26/Cys-46.

This sequence belongs to the long (4 C-C) scorpion toxin superfamily. Sodium channel inhibitor family. Beta subfamily. In terms of tissue distribution, expressed by the venom gland.

The protein resides in the secreted. Functionally, beta toxins bind voltage-independently at site-4 of sodium channels (Nav) and shift the voltage of activation toward more negative potentials thereby affecting sodium channel activation and promoting spontaneous and repetitive firing. This is Putative beta-neurotoxin RjAa4 from Rhopalurus junceus (Caribbean blue scorpion).